Here is an 84-residue protein sequence, read N- to C-terminus: Large ribosomal subunit protein bL27 (84 aa).

Positions 1 to 24 (MAHKKAGGSSRNGRDSKGQRLGCK) are disordered.

This sequence belongs to the bacterial ribosomal protein bL27 family.

In Pelobacter propionicus (strain DSM 2379 / NBRC 103807 / OttBd1), this protein is Large ribosomal subunit protein bL27.